Reading from the N-terminus, the 377-residue chain is D-alanine--D-alanine ligase (377 aa).

The region spanning 137–346 (KELMTVNGIR…RSQQAEKLIQ (210 aa)) is the ATP-grasp domain. ATP is bound at residue 167–222 (SKQLGEVVFVKAANQGSSVGVSRVTNAEEYENALRDSFQYDEKLLVEKAVESPTEL). Residues Asp300, Glu313, and Asn315 each coordinate Mg(2+).

The protein belongs to the D-alanine--D-alanine ligase family. It depends on Mg(2+) as a cofactor. Mn(2+) is required as a cofactor.

It is found in the cytoplasm. The enzyme catalyses 2 D-alanine + ATP = D-alanyl-D-alanine + ADP + phosphate + H(+). It participates in cell wall biogenesis; peptidoglycan biosynthesis. Cell wall formation. This is D-alanine--D-alanine ligase from Oenococcus oeni (strain ATCC BAA-331 / PSU-1).